The sequence spans 303 residues: Ornithine carbamoyltransferase (303 aa).

Carbamoyl phosphate is bound by residues 52 to 55, Gln-79, Arg-103, and 130 to 133; these read STRT and HPCQ. L-ornithine contacts are provided by residues Asn-161, Asp-221, and 225–226; that span reads SM. Carbamoyl phosphate contacts are provided by residues 260–261 and Arg-288; that span reads CL.

It belongs to the aspartate/ornithine carbamoyltransferase superfamily. OTCase family.

It is found in the cytoplasm. The catalysed reaction is carbamoyl phosphate + L-ornithine = L-citrulline + phosphate + H(+). It participates in amino-acid biosynthesis; L-arginine biosynthesis; L-arginine from L-ornithine and carbamoyl phosphate: step 1/3. In terms of biological role, reversibly catalyzes the transfer of the carbamoyl group from carbamoyl phosphate (CP) to the N(epsilon) atom of ornithine (ORN) to produce L-citrulline. The polypeptide is Ornithine carbamoyltransferase (argF) (Rhizobium meliloti (strain 1021) (Ensifer meliloti)).